Here is a 419-residue protein sequence, read N- to C-terminus: Zinc finger protein Pegasus (419 aa).

Lys-5 is covalently cross-linked (Glycyl lysine isopeptide (Lys-Gly) (interchain with G-Cter in SUMO2)). The interval 36 to 55 is disordered; the sequence is DKEAETLQGAGTDGDQNGLD. C2H2-type zinc fingers lie at residues 82-104, 110-132, and 138-161; these read LKCR…IRIH, HRCH…MRSH, and YKCE…RRKH. A Glycyl lysine isopeptide (Lys-Gly) (interchain with G-Cter in SUMO2) cross-link involves residue Lys-185. Positions 262-273 are enriched in polar residues; the sequence is LSSLPPENQNPA. Disordered regions lie at residues 262–284 and 297–356; these read LSSL…PDEK and VSAV…PTLP. Residues 297-311 are compositionally biased toward low complexity; sequence VSAVSASIPQSSSPT. Over residues 332-349 the composition is skewed to polar residues; it reads SEPSAHTSTPSIGNSQPS. 2 consecutive C2H2-type zinc fingers follow at residues 364–386 and 392–416; these read HHCQ…MGCH and FQCN…RGQH.

It belongs to the Ikaros C2H2-type zinc-finger protein family. Self-associates. Interacts with other family members; IKZF1, IKZF2, IKZF3 and IKZF4.

The protein resides in the nucleus. Its function is as follows. Transcriptional repressor that binds the core 5'GNNTGTNG-3' DNA consensus sequence. Involved in megakaryocyte differentiation. In Mus musculus (Mouse), this protein is Zinc finger protein Pegasus (Ikzf5).